A 580-amino-acid chain; its full sequence is Membrane protein insertase YidC (580 aa).

6 helical membrane passes run 5-25, 259-279, 362-382, 427-447, 477-497, and 513-533; these read SVTG…FMSP, KYFV…LDGS, GLII…LSLA, LGGC…FYVF, IPMY…TVFV, and IMLY…PSGL.

The protein belongs to the OXA1/ALB3/YidC family. Type 1 subfamily. In terms of assembly, interacts with the Sec translocase complex via SecD. Specifically interacts with transmembrane segments of nascent integral membrane proteins during membrane integration.

The protein localises to the cell inner membrane. Its function is as follows. Required for the insertion and/or proper folding and/or complex formation of integral membrane proteins into the membrane. Involved in integration of membrane proteins that insert both dependently and independently of the Sec translocase complex, as well as at least some lipoproteins. Aids folding of multispanning membrane proteins. This is Membrane protein insertase YidC from Chlorobium phaeovibrioides (strain DSM 265 / 1930) (Prosthecochloris vibrioformis (strain DSM 265)).